A 252-amino-acid polypeptide reads, in one-letter code: Triosephosphate isomerase (252 aa).

Position 10-12 (10-12 (NWK)) interacts with substrate. The active-site Electrophile is His-96. The active-site Proton acceptor is the Glu-168. Residues Gly-174, Ser-214, and 235 to 236 (GG) contribute to the substrate site.

Belongs to the triosephosphate isomerase family. In terms of assembly, homodimer.

Its subcellular location is the cytoplasm. It carries out the reaction D-glyceraldehyde 3-phosphate = dihydroxyacetone phosphate. Its pathway is carbohydrate biosynthesis; gluconeogenesis. It participates in carbohydrate degradation; glycolysis; D-glyceraldehyde 3-phosphate from glycerone phosphate: step 1/1. In terms of biological role, seems to be capable of enhancing bacteriocin synthesis. Involved in the gluconeogenesis. Catalyzes stereospecifically the conversion of dihydroxyacetone phosphate (DHAP) to D-glyceraldehyde-3-phosphate (G3P). The chain is Triosephosphate isomerase from Lactobacillus delbrueckii subsp. lactis.